The primary structure comprises 389 residues: Cytochrome b (389 aa).

A run of 4 helical transmembrane segments spans residues 32-52 (FGSL…FLAM), 76-98 (YILR…VHIG), 113-133 (LWSI…LGYV), and 179-199 (FFSL…AHMI). Positions 82 and 96 each coordinate heme b. H183 and H197 together coordinate heme b. H202 contributes to the a ubiquinone binding site. Transmembrane regions (helical) follow at residues 225 to 245 (FIFK…IIVF), 289 to 309 (LLGV…PFVD), 322 to 342 (INMV…LVGA), and 349 to 369 (FIFL…VIVP).

It belongs to the cytochrome b family. As to quaternary structure, fungal cytochrome b-c1 complex contains 10 subunits; 3 respiratory subunits, 2 core proteins and 5 low-molecular weight proteins. Cytochrome b-c1 complex is a homodimer. Heme b serves as cofactor.

It localises to the mitochondrion inner membrane. In terms of biological role, component of the ubiquinol-cytochrome c reductase complex (complex III or cytochrome b-c1 complex) that is part of the mitochondrial respiratory chain. The b-c1 complex mediates electron transfer from ubiquinol to cytochrome c. Contributes to the generation of a proton gradient across the mitochondrial membrane that is then used for ATP synthesis. In Mycena viridimarginata, this protein is Cytochrome b (COB).